We begin with the raw amino-acid sequence, 626 residues long: Cysteine desulfurase (626 aa).

Disordered regions lie at residues 1 to 21 (MTNT…SDPF) and 41 to 64 (AGVS…PTTS). Residues 1–225 (MTNTVPSVPA…AGAVGFDIHQ (225 aa)) form a cargo-loading domain region. The tract at residues 226–626 (VRRDFPILQE…RRIQTGSLAL (401 aa)) is cysteine desulfurase domain. An N6-(pyridoxal phosphate)lysine modification is found at K444. The active-site Cysteine persulfide intermediate is C582.

The protein belongs to the class-V pyridoxal-phosphate-dependent aminotransferase family. Csd subfamily. There are 1-2 copies of this protein in each type 2A encapsulin shell. The cofactor is pyridoxal 5'-phosphate.

The protein resides in the encapsulin nanocompartment. The enzyme catalyses (sulfur carrier)-H + L-cysteine = (sulfur carrier)-SH + L-alanine. Its activity is regulated as follows. Encapsulated enzyme is 7-fold more active than encapsulated enzyme. Cargo protein of a type 2A encapsulin nanocompartment probably involved in sulfur metabolism. Cysteine desulfurases mobilize the sulfur from L-cysteine to yield L-alanine, an essential step in sulfur metabolism for biosynthesis of a variety of sulfur-containing biomolecules. This Synechococcus elongatus (strain ATCC 33912 / PCC 7942 / FACHB-805) (Anacystis nidulans R2) protein is Cysteine desulfurase.